We begin with the raw amino-acid sequence, 73 residues long: Omega-conotoxin GVIA (73 aa).

The N-terminal stretch at 1–22 (MKLTCVVIVAVLLLTACQLITA) is a signal peptide. Residues 23–45 (DDSRGTQKHRALGSTTELSLSTR) constitute a propeptide that is removed on maturation. Intrachain disulfides connect Cys46/Cys61, Cys53/Cys64, and Cys60/Cys71. 4-hydroxyproline is present on residues Pro49, Pro55, and Pro66. Tyrosine amide; in form omega-conotoxin GVIA is present on Tyr72.

It belongs to the conotoxin O1 superfamily. Expressed by the venom duct.

Its subcellular location is the secreted. Omega-conotoxins act at presynaptic membranes, they bind and block voltage-gated calcium channels (Cav). This toxin blocks N-type calcium channels (Cav2.2/CACNA1B) with a high potency (it displaces [125I]GVIA with an IC(50)=3.7-38 pM). The sequence is that of Omega-conotoxin GVIA from Conus geographus (Geography cone).